A 296-amino-acid polypeptide reads, in one-letter code: dTDP-rhamnosyl transferase RfbF (296 aa).

It belongs to the glycosyltransferase 2 family.

It functions in the pathway bacterial outer membrane biogenesis; lipopolysaccharide biosynthesis. This Shigella flexneri protein is dTDP-rhamnosyl transferase RfbF (rfbF).